The chain runs to 436 residues: MQVSVESTSALERRMTVGVPAERIETEVNKRLQQTARRAKIPGFRPGKVPMSVIRQRYEASARQEAMGDLIQETFYEAVVEQKLNPAGSPSVEPKSFEKGKDLEYIATFEVFPEFTVSGLEDIKVERLQAEVSDADVDNMLDVLRKQNTRFEVVERAAQNDDQLNIDFVGKIDGEAFAGGSAKGTLLVLGSGRMIAGFEEGLVGAKAGEERVLNLTFPEDYQNLDLANKAAEFTVTVNSVAEPKLPELNEEFFALFGVKETGLDGFRAEVQKNMERELRQAIKSKVKNQVMEGLLQANPIEVPKALIGNEVNRLRVQAVQQFGGNIKPDQLPAELFEEQAKRRVVLGLIVAEVVKQHELKADEGRVREMIEEMASAYQEPEQVVAWYFKNEPQLNEVRSVVLEEQVVDTVLQKATVTDKQVSYEEAVKPAEAPQAA.

In terms of domain architecture, PPIase FKBP-type spans 161 to 246 (DDQLNIDFVG…VNSVAEPKLP (86 aa)).

It belongs to the FKBP-type PPIase family. Tig subfamily.

It is found in the cytoplasm. The enzyme catalyses [protein]-peptidylproline (omega=180) = [protein]-peptidylproline (omega=0). Its function is as follows. Involved in protein export. Acts as a chaperone by maintaining the newly synthesized protein in an open conformation. Functions as a peptidyl-prolyl cis-trans isomerase. This is Trigger factor from Pseudomonas aeruginosa (strain LESB58).